The chain runs to 162 residues: Regulator of sigma D (162 aa).

Belongs to the Rsd/AlgQ family. In terms of assembly, interacts with RpoD.

Its subcellular location is the cytoplasm. Binds RpoD and negatively regulates RpoD-mediated transcription activation by preventing the interaction between the primary sigma factor RpoD with the catalytic core of the RNA polymerase and with promoter DNA. May be involved in replacement of the RNA polymerase sigma subunit from RpoD to RpoS during the transition from exponential growth to the stationary phase. This Salmonella arizonae (strain ATCC BAA-731 / CDC346-86 / RSK2980) protein is Regulator of sigma D.